We begin with the raw amino-acid sequence, 376 residues long: Mitogen-activated protein kinase 5 (376 aa).

The Protein kinase domain maps to 43–329 (VPPIRPIGRG…VEEALCYPYL (287 aa)). Residues 49-57 (IGRGAYGFV) and Lys72 each bind ATP. Asp169 serves as the catalytic Proton acceptor. Phosphothreonine is present on Thr201. The TXY signature appears at 201 to 203 (TEY). Tyr203 carries the post-translational modification Phosphotyrosine. Thr206 carries the phosphothreonine modification.

This sequence belongs to the protein kinase superfamily. CMGC Ser/Thr protein kinase family. MAP kinase subfamily. Autophosphorylated on threonine and tyrosine residues. Post-translationally, dually phosphorylated on Thr-201 and Tyr-203, which activates the enzyme.

The catalysed reaction is L-seryl-[protein] + ATP = O-phospho-L-seryl-[protein] + ADP + H(+). The enzyme catalyses L-threonyl-[protein] + ATP = O-phospho-L-threonyl-[protein] + ADP + H(+). With respect to regulation, activated by threonine and tyrosine phosphorylation. Activated by the MAP kinase kinase MKK2. Activated by the MAP kinase kinase MKK6 in vitro. This is Mitogen-activated protein kinase 5 (MPK5) from Arabidopsis thaliana (Mouse-ear cress).